A 216-amino-acid polypeptide reads, in one-letter code: Nucleolar protein 12 (216 aa).

Positions 33–97 (GFHKRKVERK…LVTAKTESVQ (65 aa)) form a coiled coil. Residues 120–216 (LLGLPLPEQG…MTGKARHNGE (97 aa)) form a disordered region. Acidic residues predominate over residues 129-140 (GDQDGSQEEEVS). Composition is skewed to basic residues over residues 171–183 (AHSR…KHPR) and 200–216 (KTQR…HNGE).

This sequence belongs to the RRP17 family. In terms of assembly, interacts with KIAA1191.

The protein localises to the nucleus. Its subcellular location is the nucleolus. It is found in the cytoplasm. Its function is as follows. Multifunctional RNA binding protein that plays a role in RNA metabolism and DNA maintenance. Participates in the resolution of DNA stress and the maintenance of genome integrity by localizing to sites of DNA insults. Also plays a role in proper nucleolar organization by limiting nucleolar size and regulating nucleolar number. Mechanistically, regulates the nucleolar levels of fibrillarin and nucleolin, two key players in pre-rRNA processing and ribosome assembly. The protein is Nucleolar protein 12 (Nol12) of Rattus norvegicus (Rat).